The sequence spans 361 residues: Homer protein homolog 3 (361 aa).

Residues 1 to 80 (MSTAREQPIF…TKTSQKFGQW (80 aa)) are required for interaction with NFATC2. Residues 1-113 (MSTAREQPIF…EKFQEVKEAA (113 aa)) form the WH1 domain. Positions 114-169 (RLAREKSQDGGELTSPALGLASHQVPPSPLVSANGPGEEKLFRSQSADAPGPTERE) are disordered. 2 positions are modified to phosphoserine: Ser120 and Ser159. 2 coiled-coil regions span residues 191-243 (ALQD…SEVT) and 254-358 (GQSL…RLAE).

Belongs to the Homer family. Tetramer. Isoform 1 and isoform 2 encode coiled-coil structures that mediate homo- and heteromultimerization. Interacts with NFATC2; interaction is calcium independent; interaction competes with PPP3CA for NFATC2 binding; interaction is reduced by AKT activation. Interacts with NFATC1 and NFATC4. Interacts with SHANK1; forms a high-order complex at least composed of SHANK1 and HOMER3; the complex formation is regulated by CAMK2A-mediated phosphorylation.

The protein localises to the cytoplasm. It is found in the postsynaptic density. It localises to the synapse. Its function is as follows. Postsynaptic density scaffolding protein. Binds and cross-links cytoplasmic regions of GRM1, GRM5, ITPR1, DNM3, RYR1, RYR2, SHANK1 and SHANK3. By physically linking GRM1 and GRM5 with ER-associated ITPR1 receptors, it aids the coupling of surface receptors to intracellular calcium release. Isoforms can be differently regulated and may play an important role in maintaining the plasticity at glutamatergic synapses. Negatively regulates T cell activation by inhibiting the calcineurin-NFAT pathway. Acts by competing with calcineurin/PPP3CA for NFAT protein binding, hence preventing NFAT activation by PPP3CA. In Homo sapiens (Human), this protein is Homer protein homolog 3.